Consider the following 692-residue polypeptide: Elongation factor G (692 aa).

In terms of domain architecture, tr-type G spans 8–283 (NRIRNIGIAA…AVIDYLPAPT (276 aa)). Residues 17–24 (AHIDAGKT), 81–85 (DTPGH), and 135–138 (NKMD) each bind GTP.

This sequence belongs to the TRAFAC class translation factor GTPase superfamily. Classic translation factor GTPase family. EF-G/EF-2 subfamily.

It localises to the cytoplasm. Its function is as follows. Catalyzes the GTP-dependent ribosomal translocation step during translation elongation. During this step, the ribosome changes from the pre-translocational (PRE) to the post-translocational (POST) state as the newly formed A-site-bound peptidyl-tRNA and P-site-bound deacylated tRNA move to the P and E sites, respectively. Catalyzes the coordinated movement of the two tRNA molecules, the mRNA and conformational changes in the ribosome. This is Elongation factor G from Helicobacter pylori (strain P12).